Reading from the N-terminus, the 88-residue chain is Small ribosomal subunit protein uS15 (88 aa).

The protein belongs to the universal ribosomal protein uS15 family. In terms of assembly, part of the 30S ribosomal subunit. Forms a bridge to the 50S subunit in the 70S ribosome, contacting the 23S rRNA.

Functionally, one of the primary rRNA binding proteins, it binds directly to 16S rRNA where it helps nucleate assembly of the platform of the 30S subunit by binding and bridging several RNA helices of the 16S rRNA. Its function is as follows. Forms an intersubunit bridge (bridge B4) with the 23S rRNA of the 50S subunit in the ribosome. The chain is Small ribosomal subunit protein uS15 from Sorangium cellulosum (strain So ce56) (Polyangium cellulosum (strain So ce56)).